Reading from the N-terminus, the 521-residue chain is MIGLVVSSADTASVTISDQLHELVEWESHRDAAGDEYEQYDDFEMRTIDEWHLEAENASELFSTTPQIIAFLSRHSGDTGPLLTTHFTGNFGPAEYGGEPGSFAQACPMIQQTLLEAFDRYAPSKYDVGIECTHHGPTTVGAPSLFVELGSSKAEWNDPDGAHAVAQAILELSGEDAPANVETDRTVVGFGGGHYAPRFERIIRETDWVVGHIGADWALDSMGAPAANRDIINHAVTASDADVALVADDRPELTKVISQADIRVVQERWLRETTGVSRPMVSALENALVPIASGLRLGTPATEYDPATSDEFVITDRHTDNDAVGTVHTKDSTDIDTGTNHNVDAERTESEDSHNIRDAIDRADADAVVLAFPTSLMETISGIDIETTNQVFSEHTLAFETTEGGTRPTGRMIVSDYLSVESITHALIDILKLKYDRVERTDETLRVRRQVFDPAKAATLDVPEGPAFGRLAAGESVTVAGRTIDPEAVHTTETVTFPVFSTSSSSSSSSSSSSSSSSSSS.

Disordered stretches follow at residues 323-353 (AVGT…SEDS) and 499-521 (VFST…SSSS). A compositionally biased stretch (basic and acidic residues) spans 343–353 (VDAERTESEDS). Positions 501–521 (STSSSSSSSSSSSSSSSSSSS) are enriched in low complexity.

The protein belongs to the DtdA deacylase family. In terms of assembly, monomer. The cofactor is Zn(2+).

It catalyses the reaction a D-aminoacyl-tRNA + H2O = a tRNA + a D-alpha-amino acid + H(+). It carries out the reaction glycyl-tRNA(Ala) + H2O = tRNA(Ala) + glycine + H(+). Its function is as follows. D-aminoacyl-tRNA deacylase with broad substrate specificity. By recycling D-aminoacyl-tRNA to D-amino acids and free tRNA molecules, this enzyme counteracts the toxicity associated with the formation of D-aminoacyl-tRNA entities in vivo. This chain is D-aminoacyl-tRNA deacylase, found in Haloquadratum walsbyi (strain DSM 16790 / HBSQ001).